Reading from the N-terminus, the 179-residue chain is Disulfide bond formation protein B (179 aa).

At 1–14 (MLSYFKELSLRRPA) the chain is on the cytoplasmic side. A helical membrane pass occupies residues 15 to 31 (WLLLATLACTLEVTGLY). Residues 32–49 (FQHKLGLIPCVMCIYERV) are Periplasmic-facing. Cysteine 41 and cysteine 44 are oxidised to a cystine. Residues 50 to 65 (ALTGLLIAGLIALIAP) traverse the membrane as a helical segment. The Cytoplasmic segment spans residues 66-72 (NFFLFRW). Residues 73–90 (LALVLWGFSAFKGLSLSI) traverse the membrane as a helical segment. At 91–146 (KHYDYQANPSPWNQCEFKPQFPQTIPLDEWFPNIFAAGTVNCSEKQWQMLGWGMPE) the chain is on the periplasmic side. A disulfide bond links cysteine 105 and cysteine 132. A helical transmembrane segment spans residues 147-165 (WLIVAFSLFMLFFLIVFMS). Over 166-179 (QFKRAKPQYRSVFR) the chain is Cytoplasmic.

Belongs to the DsbB family.

It is found in the cell inner membrane. Functionally, required for disulfide bond formation in some periplasmic proteins. Acts by oxidizing the DsbA protein. The chain is Disulfide bond formation protein B from Haemophilus ducreyi (strain 35000HP / ATCC 700724).